A 430-amino-acid chain; its full sequence is Phosphoribosylamine--glycine ligase (430 aa).

Positions 109 to 316 constitute an ATP-grasp domain; it reads KDFMARHGIP…LLDLIEAALN (208 aa). ATP is bound at residue 135–196; the sequence is VRQQGAPIVI…EEYLDGEEAS (62 aa). Mg(2+)-binding residues include E286 and N288.

The protein belongs to the GARS family. The cofactor is Mg(2+). It depends on Mn(2+) as a cofactor.

The enzyme catalyses 5-phospho-beta-D-ribosylamine + glycine + ATP = N(1)-(5-phospho-beta-D-ribosyl)glycinamide + ADP + phosphate + H(+). It participates in purine metabolism; IMP biosynthesis via de novo pathway; N(1)-(5-phospho-D-ribosyl)glycinamide from 5-phospho-alpha-D-ribose 1-diphosphate: step 2/2. In Xylella fastidiosa (strain Temecula1 / ATCC 700964), this protein is Phosphoribosylamine--glycine ligase.